The following is a 447-amino-acid chain: Phosphoglucosamine mutase (447 aa).

The active-site Phosphoserine intermediate is S100. Residues S100, D239, D241, and D243 each coordinate Mg(2+). Residue S100 is modified to Phosphoserine.

The protein belongs to the phosphohexose mutase family. The cofactor is Mg(2+). Activated by phosphorylation.

It catalyses the reaction alpha-D-glucosamine 1-phosphate = D-glucosamine 6-phosphate. Functionally, catalyzes the conversion of glucosamine-6-phosphate to glucosamine-1-phosphate. This chain is Phosphoglucosamine mutase, found in Dictyoglomus turgidum (strain DSM 6724 / Z-1310).